A 161-amino-acid polypeptide reads, in one-letter code: Arachidonate 5-lipoxygenase-activating protein (161 aa).

Residues 1–8 are Lumenal-facing; sequence MDQETVGN. The helical transmembrane segment at 9 to 30 threads the bilayer; it reads VVLLAIVTLISVVQNGFFAHKV. The Cytoplasmic segment spans residues 31–52; that stretch reads EHESRTQNGRSFQRTGTLAFER. Residues 53 to 77 traverse the membrane as a helical segment; it reads VYTANQNCVDAYPTFLAVLWSAGLL. The Lumenal portion of the chain corresponds to 78 to 80; it reads CSQ. A helical transmembrane segment spans residues 81 to 102; the sequence is VPAAFAGLMYLLVRQKYFVGYL. Residues 103–107 lie on the Cytoplasmic side of the membrane; the sequence is GERTQ. Residues 108–115 lie within the membrane without spanning it; the sequence is STPGYIFG. The helical transmembrane segment at 116 to 128 threads the bilayer; it reads KRIILFLFLMSVA. Residues 129–161 lie on the Lumenal side of the membrane; sequence GIFNYYLIFFFGSDFENYIKTVTTTISPLLLIP.

This sequence belongs to the MAPEG family. As to quaternary structure, homotrimer. Interacts with LTC4S and ALOX5.

Its subcellular location is the nucleus membrane. The protein resides in the endoplasmic reticulum membrane. Functionally, required for leukotriene biosynthesis by ALOX5 (5-lipoxygenase). Anchors ALOX5 to the membrane. Binds arachidonic acid, and could play an essential role in the transfer of arachidonic acid to ALOX5. Binds to MK-886, a compound that blocks the biosynthesis of leukotrienes. This is Arachidonate 5-lipoxygenase-activating protein (ALOX5AP) from Macaca fascicularis (Crab-eating macaque).